Reading from the N-terminus, the 370-residue chain is Protein phosphatase 2C homolog 2 (370 aa).

The PPM-type phosphatase domain occupies 23–291 (HFGVSHMQGW…DNMTICIVAF (269 aa)). Mn(2+)-binding residues include aspartate 63, glycine 64, aspartate 233, and aspartate 282. Residues serine 355 and serine 357 each carry the phosphoserine modification.

This sequence belongs to the PP2C family. As to quaternary structure, monomer. The cofactor is Mg(2+). It depends on Mn(2+) as a cofactor.

Its subcellular location is the nucleus. The protein resides in the cytoplasm. It is found in the cytosol. It catalyses the reaction O-phospho-L-seryl-[protein] + H2O = L-seryl-[protein] + phosphate. It carries out the reaction O-phospho-L-threonyl-[protein] + H2O = L-threonyl-[protein] + phosphate. Activity is reduced when phosphosrylated at Ser-355/Ser-357. Its function is as follows. Dephosphorylating regulator for many key proteins. Has an important role in osmotic stability and cell shape control. It may negatively regulate the osmosensing signal transmitted through wis1 map kinase. This is Protein phosphatase 2C homolog 2 (ptc2) from Schizosaccharomyces pombe (strain 972 / ATCC 24843) (Fission yeast).